A 212-amino-acid polypeptide reads, in one-letter code: Large ribosomal subunit protein uL1 (212 aa).

This sequence belongs to the universal ribosomal protein uL1 family. In terms of assembly, part of the 50S ribosomal subunit.

In terms of biological role, binds directly to 23S rRNA. Probably involved in E site tRNA release. Its function is as follows. Protein L1 is also a translational repressor protein, it controls the translation of its operon by binding to its mRNA. The protein is Large ribosomal subunit protein uL1 of Halobacterium salinarum (strain ATCC 29341 / DSM 671 / R1).